Here is a 339-residue protein sequence, read N- to C-terminus: DnaJ homolog subfamily C member 22 (339 aa).

The region spanning 4–50 (GLLMTYVLWALGGPVGLHHLYLGRDSHALLWMLTLGGGGLGWLWEFW) is the TM2 domain. The next 7 helical transmembrane spans lie at 5–25 (LLMT…HLYL), 30–50 (HALL…WEFW), 81–101 (FASQ…SLSS), 105–125 (FYIV…AAVG), 135–155 (LGAA…ILPI), 185–205 (VGLA…YNTA), and 218–238 (FLSW…VLLL). The region spanning 277–339 (LAHQVLGVPE…LSQPKKPRAS (63 aa)) is the J domain.

It is found in the membrane. May function as a co-chaperone. This is DnaJ homolog subfamily C member 22 (Dnajc22) from Mus musculus (Mouse).